The primary structure comprises 488 residues: Glutamyl-tRNA(Gln) amidotransferase subunit A (488 aa).

Active-site charge relay system residues include lysine 76 and serine 151. The active-site Acyl-ester intermediate is the serine 175.

Belongs to the amidase family. GatA subfamily. As to quaternary structure, heterotrimer of A, B and C subunits.

The enzyme catalyses L-glutamyl-tRNA(Gln) + L-glutamine + ATP + H2O = L-glutaminyl-tRNA(Gln) + L-glutamate + ADP + phosphate + H(+). Its function is as follows. Allows the formation of correctly charged Gln-tRNA(Gln) through the transamidation of misacylated Glu-tRNA(Gln) in organisms which lack glutaminyl-tRNA synthetase. The reaction takes place in the presence of glutamine and ATP through an activated gamma-phospho-Glu-tRNA(Gln). This is Glutamyl-tRNA(Gln) amidotransferase subunit A from Symbiobacterium thermophilum (strain DSM 24528 / JCM 14929 / IAM 14863 / T).